A 643-amino-acid chain; its full sequence is Hypoxia up-regulated protein 1 (643 aa).

Positions 1–22 (MRPLVCVFTMFLLALLSSNTES) are cleaved as a signal peptide. A disordered region spans residues 565–643 (LGNTISSLFG…EEEKSEPQEE (79 aa)). Over residues 590–610 (VQEEDEVPTEPTKEEEQESAD) the composition is skewed to acidic residues. Basic and acidic residues-rich tracts occupy residues 611-621 (AADKQKDKEKG) and 630-643 (EGKK…PQEE).

This sequence belongs to the heat shock protein 70 family.

Its subcellular location is the endoplasmic reticulum lumen. Functionally, has a pivotal role in cytoprotective cellular mechanisms triggered by oxygen deprivation. May play a role as a molecular chaperone and participate in protein folding. In Xenopus tropicalis (Western clawed frog), this protein is Hypoxia up-regulated protein 1 (hyou1).